The sequence spans 308 residues: Transaldolase (308 aa).

Lys125 acts as the Schiff-base intermediate with substrate in catalysis.

This sequence belongs to the transaldolase family. Type 1 subfamily. In terms of assembly, homodimer.

Its subcellular location is the cytoplasm. The catalysed reaction is D-sedoheptulose 7-phosphate + D-glyceraldehyde 3-phosphate = D-erythrose 4-phosphate + beta-D-fructose 6-phosphate. Its pathway is carbohydrate degradation; pentose phosphate pathway; D-glyceraldehyde 3-phosphate and beta-D-fructose 6-phosphate from D-ribose 5-phosphate and D-xylulose 5-phosphate (non-oxidative stage): step 2/3. Transaldolase is important for the balance of metabolites in the pentose-phosphate pathway. The protein is Transaldolase of Stutzerimonas stutzeri (strain A1501) (Pseudomonas stutzeri).